Consider the following 772-residue polypeptide: Glucocorticoid receptor (772 aa).

A compositionally biased stretch (basic and acidic residues) spans 1 to 15; sequence MDSKESLSPPGREEV. Residues 1–22 form a disordered region; sequence MDSKESLSPPGREEVPSSVLRP. The modulating stretch occupies residues 1–415; it reads MDSKESLSPP…TTAAGPPPKL (415 aa). The residue at position 25 (arginine 25) is an Omega-N-methylarginine. The tract at residues 39–82 is disordered; the sequence is APVRVPASSPSLAPAAQPDSKQQRLAVDFPKGSASNAQQPDLSR. A compositionally biased stretch (low complexity) spans 44–58; that stretch reads PASSPSLAPAAQPDS. Phosphoserine occurs at positions 47, 115, 136, and 143. The tract at residues 132-186 is disordered; the sequence is NRSASGADNPRSTAPAAGSAAPTEGFPKTHSDLASERQNPKGQTGGSAGSAKLHP. The span at 143-156 shows a compositional bias: low complexity; the sequence is STAPAAGSAAPTEG. The span at 158–170 shows a compositional bias: basic and acidic residues; it reads PKTHSDLASERQN. Residues serine 203, serine 211, and serine 226 each carry the phosphoserine modification. Lysine 258 is covalently cross-linked (Glycyl lysine isopeptide (Lys-Gly) (interchain with G-Cter in SUMO2)). Residues lysine 277 and lysine 293 each participate in a glycyl lysine isopeptide (Lys-Gly) (interchain with G-Cter in SUMO); alternate cross-link. Residues lysine 277 and lysine 293 each participate in a glycyl lysine isopeptide (Lys-Gly) (interchain with G-Cter in SUMO2); alternate cross-link. Residues serine 307 and serine 400 each carry the phosphoserine modification. Lysine 414 participates in a covalent cross-link: Glycyl lysine isopeptide (Lys-Gly) (interchain with G-Cter in ubiquitin). 2 consecutive NR C4-type zinc fingers follow at residues 416–436 and 452–476; these read CLVC…CGSC and CAGR…YRKC. The nuclear receptor DNA-binding region spans 416–481; sequence CLVCSDEASG…RYRKCLQAGM (66 aa). Residues lysine 475, lysine 487, lysine 489, and lysine 490 each carry the N6-acetyllysine modification. The segment at 480–772 is interaction with CLOCK; it reads GMNLEARKTK…NIKKLLFHQK (293 aa). A hinge region spans residues 482 to 518; the sequence is NLEARKTKKKIKGIQQTSTGVSQETSENPSNRTVVPA. Residues 494 to 513 are disordered; that stretch reads GIQQTSTGVSQETSENPSNR. Residues 499-513 show a composition bias toward polar residues; the sequence is STGVSQETSENPSNR. One can recognise an NR LBD domain in the interval 519–753; the sequence is ALPQLTPTLV…FPEMLAEIIT (235 aa). Residues 527–692 are interaction with CRY1; that stretch reads LVSLLEVIEP…EIRMTYIKEL (166 aa). Lysine 698 is covalently cross-linked (Glycyl lysine isopeptide (Lys-Gly) (interchain with G-Cter in SUMO)).

Belongs to the nuclear hormone receptor family. NR3 subfamily. As to quaternary structure, heteromultimeric cytoplasmic complex with HSP90AA1, HSPA1A/HSPA1B, and FKBP5 or another immunophilin such as PPID, STIP1, or the immunophilin homolog PPP5C. Upon ligand binding FKBP5 dissociates from the complex and FKBP4 takes its place, thereby linking the complex to dynein and mediating transport to the nucleus, where the complex dissociates. Probably forms a complex composed of chaperones HSP90 and HSP70, co-chaperones CDC37, PPP5C, TSC1 and client protein TSC2, CDK4, AKT, RAF1 and NR3C1; this complex does not contain co-chaperones STIP1/HOP and PTGES3/p23. Directly interacts with UNC45A. Binds to DNA as a homodimer, and as heterodimer with NR3C2 or the retinoid X receptor. Binds STAT5A and STAT5B homodimers and heterodimers. Interacts with NRIP1, POU2F1, POU2F2 and TRIM28. Interacts with several coactivator complexes, including the SMARCA4 complex, CREBBP/EP300, TADA2L (Ada complex) and p160 coactivators such as NCOA2 and NCOA6. Interaction with BAG1 inhibits transactivation. Interacts with HEXIM1 and TGFB1I1. Interacts with NCOA1. Interacts with NCOA3, SMARCA4, SMARCC1, SMARCD1, and SMARCE1. Interacts with CLOCK, CRY1 and CRY2 in a ligand-dependent fashion. Interacts with CIART. Interacts with RWDD3. Interacts with UBE2I/UBC9 and this interaction is enhanced in the presence of RWDD3. Interacts with GRIP1. Interacts with NR4A3 (via nuclear receptor DNA-binding domain), represses transcription activity of NR4A3 on the POMC promoter Nur response element (NurRE). Directly interacts with PNRC2 to attract and form a complex with UPF1 and DCP1A; the interaction leads to rapid mRNA degradation. Interacts with GSK3B. Interacts with FNIP1 and FNIP2. Interacts (via C-terminus) with HNRNPU (via C-terminus). Interacts with MCM3AP. Interacts (via domain NR LBD) with HSP90AA1 and HSP90AB1. In the absence of hormonal ligand, interacts with TACC1. Interacts (via NR LBD domain) with ZNF764 (via KRAB domain); the interaction regulates transcription factor activity of NR3C1 by directing its actions toward certain biologic pathways. Acetylation by CLOCK reduces its binding to glucocorticoid response elements and its transcriptional activity. Post-translationally, increased proteasome-mediated degradation in response to glucocorticoids. In terms of processing, phosphorylated in the absence of hormone; becomes hyperphosphorylated in the presence of glucocorticoid. The Ser-203, Ser-226 and Ser-399-phosphorylated forms are mainly cytoplasmic, and the Ser-211-phosphorylated form is nuclear. Phosphorylation at Ser-211 increases transcriptional activity. Phosphorylation at Ser-203, Ser-226 and Ser-399 decreases signaling capacity. Phosphorylation at Ser-399 may protect from glucocorticoid-induced apoptosis. Phosphorylation at Ser-203 and Ser-211 is not required in regulation of chromosome segregation. May be dephosphorylated by PPP5C, attenuates NR3C1 action. Ubiquitinated by UBR5, leading to its degradation: UBR5 specifically recognizes and binds ligand-bound NR3C1 when it is not associated with coactivators (NCOAs). In presence of NCOAs, the UBR5-degron is not accessible, preventing its ubiquitination and degradation. Post-translationally, sumoylation at Lys-277 and Lys-293 negatively regulates its transcriptional activity. Sumoylation at Lys-698 positively regulates its transcriptional activity in the presence of RWDD3. Sumoylation at Lys-277 and Lys-293 is dispensable whereas sumoylation at Lys-698 is critical for the stimulatory effect of RWDD3 on its transcriptional activity. Heat shock increases sumoylation in a RWDD3-dependent manner.

Its subcellular location is the cytoplasm. It localises to the nucleus. It is found in the mitochondrion. The protein localises to the cytoskeleton. The protein resides in the spindle. Its subcellular location is the microtubule organizing center. It localises to the centrosome. It is found in the chromosome. The protein localises to the nucleoplasm. In terms of biological role, receptor for glucocorticoids (GC). Has a dual mode of action: as a transcription factor that binds to glucocorticoid response elements (GRE), both for nuclear and mitochondrial DNA, and as a modulator of other transcription factors. Affects inflammatory responses, cellular proliferation and differentiation in target tissues. Involved in chromatin remodeling. Plays a role in rapid mRNA degradation by binding to the 5' UTR of target mRNAs and interacting with PNRC2 in a ligand-dependent manner which recruits the RNA helicase UPF1 and the mRNA-decapping enzyme DCP1A, leading to RNA decay. Could act as a coactivator for STAT5-dependent transcription upon growth hormone (GH) stimulation and could reveal an essential role of hepatic GR in the control of body growth. Mediates glucocorticoid-induced apoptosis. Promotes accurate chromosome segregation during mitosis. May act as a tumor suppressor. May play a negative role in adipogenesis through the regulation of lipolytic and antilipogenic gene expression. The sequence is that of Glucocorticoid receptor (NR3C1) from Oryctolagus cuniculus (Rabbit).